Reading from the N-terminus, the 102-residue chain is MAVRWYCWQQEALIIQIRLQPRAKGDEVIGPHGDRLKIRITAPPVEGKANTHLLRFLAKTFQVSRNQVYLLSGATSRDKRVRIEKPTKLLPGITPPIRKTVR.

Belongs to the UPF0235 family.

The polypeptide is UPF0235 protein Noc_3000 (Nitrosococcus oceani (strain ATCC 19707 / BCRC 17464 / JCM 30415 / NCIMB 11848 / C-107)).